A 198-amino-acid chain; its full sequence is Recombination protein RecR (198 aa).

The segment at 57 to 72 (CSVCGHITENDPCYIC) adopts a C4-type zinc-finger fold. A Toprim domain is found at 80–175 (SVICVVEDDK…KVTRLAQGLS (96 aa)).

Belongs to the RecR family.

Functionally, may play a role in DNA repair. It seems to be involved in an RecBC-independent recombinational process of DNA repair. It may act with RecF and RecO. This Staphylococcus aureus (strain Mu3 / ATCC 700698) protein is Recombination protein RecR.